The primary structure comprises 1036 residues: Ephrin type-A receptor 6 (1036 aa).

A signal peptide spans 1–22 (MGGCEVREFLLQFGFFLPLLTA). Topologically, residues 23–550 (WPGDCSHVSN…MAAEQGQILV (528 aa)) are extracellular. One can recognise an Eph LBD domain in the interval 34–212 (QVVLLDTTTV…FYKKCPFTVR (179 aa)). Fibronectin type-III domains lie at 331–441 (PPSA…TDQD) and 442–537 (APSL…TGDE). 3 N-linked (GlcNAc...) asparagine glycosylation sites follow: Asn343, Asn397, and Asn410. Residues 551–571 (IATAAVGGFTLLVILTLFFLI) traverse the membrane as a helical segment. The Cytoplasmic segment spans residues 572–1036 (TGRCQWYIKA…MHIQEKGFHV (465 aa)). 2 positions are modified to phosphotyrosine; by autocatalysis: Tyr606 and Tyr612. One can recognise a Protein kinase domain in the interval 631–944 (IRIERVIGAG…RNPSALHTLV (314 aa)). Residues 637–645 (IGAGEFGEV) and Lys663 each bind ATP. The active-site Proton acceptor is Asp798. A phosphotyrosine; by autocatalysis mark is found at Tyr831 and Tyr978. Residues 961–1025 (PLFVTVGDWL…VSSIQTLRLH (65 aa)) enclose the SAM domain. A PDZ-binding motif is present at residues 1034–1036 (FHV).

The protein belongs to the protein kinase superfamily. Tyr protein kinase family. Ephrin receptor subfamily. In terms of assembly, heterotetramer upon binding of the ligand. The heterotetramer is composed of an ephrin dimer and a receptor dimer. Oligomerization is probably required to induce biological responses. Interacts (via SAM domain) with ANKS1A (via SAM domain). In terms of tissue distribution, expressed in brain and testis.

Its subcellular location is the membrane. The catalysed reaction is L-tyrosyl-[protein] + ATP = O-phospho-L-tyrosyl-[protein] + ADP + H(+). Functionally, receptor tyrosine kinase which binds promiscuously GPI-anchored ephrin-A family ligands residing on adjacent cells, leading to contact-dependent bidirectional signaling into neighboring cells. The signaling pathway downstream of the receptor is referred to as forward signaling while the signaling pathway downstream of the ephrin ligand is referred to as reverse signaling. This is Ephrin type-A receptor 6 (EPHA6) from Homo sapiens (Human).